The sequence spans 82 residues: Small ribosomal subunit protein bS16 (82 aa).

Belongs to the bacterial ribosomal protein bS16 family.

This is Small ribosomal subunit protein bS16 from Haemophilus ducreyi (strain 35000HP / ATCC 700724).